The chain runs to 142 residues: Gonadotropin subunit beta-2 (142 aa).

The N-terminal stretch at 1 to 24 (MLGLHVGTLMISLFLCILLEPVEG) is a signal peptide. 6 cysteine pairs are disulfide-bonded: cysteine 30/cysteine 78, cysteine 44/cysteine 93, cysteine 47/cysteine 131, cysteine 55/cysteine 109, cysteine 59/cysteine 111, and cysteine 114/cysteine 121. A glycan (N-linked (GlcNAc...) asparagine) is linked at asparagine 34.

It belongs to the glycoprotein hormones subunit beta family. As to quaternary structure, heterodimer of an alpha and a beta chain.

It is found in the secreted. Its function is as follows. Involved in gametogenesis and steroidogenesis. The polypeptide is Gonadotropin subunit beta-2 (cgbb) (Coregonus autumnalis (Arctic cisco)).